A 142-amino-acid polypeptide reads, in one-letter code: ATP synthase epsilon chain (142 aa).

It belongs to the ATPase epsilon chain family. F-type ATPases have 2 components, CF(1) - the catalytic core - and CF(0) - the membrane proton channel. CF(1) has five subunits: alpha(3), beta(3), gamma(1), delta(1), epsilon(1). CF(0) has three main subunits: a, b and c.

It localises to the cell inner membrane. Produces ATP from ADP in the presence of a proton gradient across the membrane. The sequence is that of ATP synthase epsilon chain from Shewanella denitrificans (strain OS217 / ATCC BAA-1090 / DSM 15013).